The sequence spans 2457 residues: Highly reducing polyketide synthase ACTTS3 (2457 aa).

In terms of domain architecture, Ketosynthase family 3 (KS3) spans 5–435 (REPIAVIGSA…GTNAHVILES (431 aa)). Catalysis depends on for beta-ketoacyl synthase activity residues Cys179, His316, and His356. Residues 545–856 (RVLGIFTGQG…VMEAVLESSP (312 aa)) are malonyl-CoA:ACP transacylase (MAT) domain. The For malonyltransferase activity role is filled by Ser641. Positions 938–1078 (HELLGRRTAD…GRIIIHLGSG (141 aa)) are N-terminal hotdog fold. The segment at 938–1244 (HELLGRRTAD…LSLKSVAEPT (307 aa)) is dehydratase (DH) domain. The region spanning 938–1246 (HELLGRRTAD…LKSVAEPTEE (309 aa)) is the PKS/mFAS DH domain. Residue His970 is the Proton acceptor; for dehydratase activity of the active site. The C-terminal hotdog fold stretch occupies residues 1091–1246 (TDLSPVDLDR…LKSVAEPTEE (156 aa)). The Proton donor; for dehydratase activity role is filled by Asp1152. The methyltransferase (CMet) domain stretch occupies residues 1399-1587 (ETMNNCIARA…DVFYDFPDRS (189 aa)). The interval 2085-2281 (FLPDKTYLMI…SDRHIENHLR (197 aa)) is ketoreductase (KR) domain. The 78-residue stretch at 2374–2451 (DVTTVFQQAF…EISIDATKKY (78 aa)) folds into the Carrier domain. Ser2411 carries the post-translational modification O-(pantetheine 4'-phosphoryl)serine.

It depends on pantetheine 4'-phosphate as a cofactor.

It functions in the pathway mycotoxin biosynthesis. Its function is as follows. Highly reducing polyketide synthase; part of the gene clusters that mediate the biosynthesis of the host-selective toxins (HSTs) ACT-toxins responsible for brown spot of tangerine disease by the tangerine pathotype which affects tangerines and mandarins. ACT-toxins consist of three moieties, 9,10-epoxy-8-hydroxy-9-methyl-decatrienoic acid (EDA), valine and a polyketide. ACT-toxin I is toxic to both citrus and pear; toxin II the 5''-deoxy derivative of ACT-toxin I, is highly toxic to pear and slightly toxic to citrus. On cellular level, ACT-toxins affect plasma membrane of susceptible cells and cause a sudden increase in loss of K(+) after a few minutes of toxin treatment. The acyl-CoA ligase ACTT1, the hydrolase ACTT2, the enoyl-CoA hydratases ACTT3 and ACTT6, and the acyl-CoA synthetase ACTT5 are all involved in the biosynthesis of the AK-, AF- and ACT-toxin common 9,10-epoxy-8-hydroxy-9-methyl-decatrienoic acid (EDA) structural moiety. The exact role of each enzyme, and of additional enzymes identified within the AF-toxin clusters have still to be determined. On the other hand, ACTTS1 to ACTTS4 are specific to the tangerine pathotype. The function of ACTTS3 is to elongate the polyketide chain portion of ACT-toxin that is unique to this toxin. The enoyl-reductase ACTTS2 might complement the missing enoyl-reductase (ER) domain in ACTTS3 in the synthesis of the polyketide portion of ACT-toxin. The roles of the nonribosomal peptide synthetases-related proteins ACTTS1 and ACTTS4 have also still not been elucidated. In Alternaria alternata (Alternaria rot fungus), this protein is Highly reducing polyketide synthase ACTTS3.